The chain runs to 207 residues: High frequency lysogenization protein HflD homolog (207 aa).

It belongs to the HflD family.

It is found in the cytoplasm. The protein localises to the cell inner membrane. This is High frequency lysogenization protein HflD homolog from Pseudomonas fluorescens (strain SBW25).